A 504-amino-acid polypeptide reads, in one-letter code: Maturase K (504 aa).

Belongs to the intron maturase 2 family. MatK subfamily.

The protein localises to the plastid. The protein resides in the chloroplast. Usually encoded in the trnK tRNA gene intron. Probably assists in splicing its own and other chloroplast group II introns. This is Maturase K from Barbarea vulgaris (Yellow rocket).